A 139-amino-acid polypeptide reads, in one-letter code: Thiosulfate:glutathione sulfurtransferase (139 aa).

Position 26 is a phosphoserine (S26). The Rhodanese domain occupies 37-138 (HDPNVVLVDV…WVSHGGDKLD (102 aa)). C98 serves as the catalytic Cysteine persulfide intermediate.

Its subcellular location is the mitochondrion. The catalysed reaction is thiosulfate + glutathione = S-sulfanylglutathione + sulfite + H(+). With respect to regulation, GSS(-) is a potent inhibitor of RDL1, since the presence of the sulfur dioxygenase strongly increases the RDL1 catalytic activity. In terms of biological role, thiosulfate:glutathione sulfurtransferase (TST) required to produce S-sulfanylglutathione (GSS(-)), a central intermediate in hydrogen sulfide metabolism. Provides the link between the first step in H(2)S metabolism performed by the sulfide:quinone oxidoreductase (SQOR) which catalyzes the conversion of H(2)S to thiosulfate, and the sulfur dioxygenase (SDO) which uses GSS(-) as substrate. The thermodynamic coupling of the irreversible SDO and reversible TST reactions provides a model for the physiologically relevant reaction with thiosulfate as the sulfane donor. The polypeptide is Thiosulfate:glutathione sulfurtransferase (RDL1) (Saccharomyces cerevisiae (strain ATCC 204508 / S288c) (Baker's yeast)).